Here is a 433-residue protein sequence, read N- to C-terminus: Serine--tRNA ligase (433 aa).

An L-serine-binding site is contributed by 235–237 (TSE). 266-268 (RSE) contributes to the ATP binding site. An L-serine-binding site is contributed by Glu289. Position 353-356 (353-356 (EISS)) interacts with ATP. Position 388 (Ser388) interacts with L-serine.

This sequence belongs to the class-II aminoacyl-tRNA synthetase family. Type-1 seryl-tRNA synthetase subfamily. In terms of assembly, homodimer. The tRNA molecule binds across the dimer.

The protein localises to the cytoplasm. It carries out the reaction tRNA(Ser) + L-serine + ATP = L-seryl-tRNA(Ser) + AMP + diphosphate + H(+). The enzyme catalyses tRNA(Sec) + L-serine + ATP = L-seryl-tRNA(Sec) + AMP + diphosphate + H(+). The protein operates within aminoacyl-tRNA biosynthesis; selenocysteinyl-tRNA(Sec) biosynthesis; L-seryl-tRNA(Sec) from L-serine and tRNA(Sec): step 1/1. In terms of biological role, catalyzes the attachment of serine to tRNA(Ser). Is also able to aminoacylate tRNA(Sec) with serine, to form the misacylated tRNA L-seryl-tRNA(Sec), which will be further converted into selenocysteinyl-tRNA(Sec). The sequence is that of Serine--tRNA ligase from Burkholderia cenocepacia (strain HI2424).